Reading from the N-terminus, the 502-residue chain is UDP-N-acetylmuramate--L-alanine ligase (502 aa).

120 to 126 (GTHGKTS) provides a ligand contact to ATP.

Belongs to the MurCDEF family.

The protein localises to the cytoplasm. The enzyme catalyses UDP-N-acetyl-alpha-D-muramate + L-alanine + ATP = UDP-N-acetyl-alpha-D-muramoyl-L-alanine + ADP + phosphate + H(+). It participates in cell wall biogenesis; peptidoglycan biosynthesis. In terms of biological role, cell wall formation. The chain is UDP-N-acetylmuramate--L-alanine ligase from Rhodococcus erythropolis (strain PR4 / NBRC 100887).